We begin with the raw amino-acid sequence, 399 residues long: Stomatin-like protein 1 (399 aa).

Residues 6 to 10 carry the Tyrosine-type lysosomal sorting signal motif; sequence GYRAL. Serine 28 bears the Phosphoserine mark. Residues 58–78 form a helical; Signal-anchor for type III membrane protein membrane-spanning segment; it reads LVSVLGFLLLLLTFPISGWFA. Residues 79 to 399 lie on the Cytoplasmic side of the membrane; it reads LKIVPTYERM…KLEAVLKALK (321 aa). The SCP2 domain maps to 288–399; the sequence is KQPVAEGLLT…KLEAVLKALK (112 aa).

Belongs to the band 7/mec-2 family. Interacts with STOM; may redistribute STOM from the plasma membrane to late endosomes. As to expression, expressed in dorsal root ganglion neurons.

Its subcellular location is the membrane. It localises to the cytoplasmic vesicle. It is found in the cell membrane. The protein resides in the late endosome membrane. The protein localises to the membrane raft. May play a role in cholesterol transfer to late endosomes. May play a role in modulating membrane acid-sensing ion channels. Can specifically inhibit proton-gated current of ASIC1 isoform 1. Can increase inactivation speed of ASIC3. May be involved in regulation of proton sensing in dorsal root ganglions. In Mus musculus (Mouse), this protein is Stomatin-like protein 1 (Stoml1).